Reading from the N-terminus, the 213-residue chain is Peptidyl-tRNA hydrolase (213 aa).

Tyr26 contributes to the tRNA binding site. The active-site Proton acceptor is His31. Residues Tyr78, Asn80, and Asn126 each coordinate tRNA.

This sequence belongs to the PTH family. As to quaternary structure, monomer.

It localises to the cytoplasm. It catalyses the reaction an N-acyl-L-alpha-aminoacyl-tRNA + H2O = an N-acyl-L-amino acid + a tRNA + H(+). In terms of biological role, hydrolyzes ribosome-free peptidyl-tRNAs (with 1 or more amino acids incorporated), which drop off the ribosome during protein synthesis, or as a result of ribosome stalling. Functionally, catalyzes the release of premature peptidyl moieties from peptidyl-tRNA molecules trapped in stalled 50S ribosomal subunits, and thus maintains levels of free tRNAs and 50S ribosomes. This chain is Peptidyl-tRNA hydrolase, found in Trichormus variabilis (strain ATCC 29413 / PCC 7937) (Anabaena variabilis).